Here is a 133-residue protein sequence, read N- to C-terminus: Type III secretion protein HrcQb (133 aa).

Residues 1 to 21 (MSTEDLYQDDVEMLDDYEEPV) are compositionally biased toward acidic residues. The tract at residues 1 to 60 (MSTEDLYQDDVEMLDDYEEPVPEQADQQQRDDEYAEHAFGYADSDAEHEEQSGDHHESPM) is disordered. Residues 49–59 (EEQSGDHHESP) show a composition bias toward basic and acidic residues.

This sequence belongs to the FliN/MopA/SpaO family. As to quaternary structure, homotetramer. The four monomers assemble into two tightly bound homodimers. Interacts with HrcQa.

The protein localises to the cytoplasm. In terms of biological role, component of the type III secretion system, which is required for effector protein delivery, parasitism, and pathogenicity. Probably participates in the formation of a C-ring-like assembly along with HrcQa. The sequence is that of Type III secretion protein HrcQb (hrcQb) from Pseudomonas syringae pv. syringae.